A 330-amino-acid chain; its full sequence is UDP-glucose 4-epimerase (330 aa).

NAD(+) is bound by residues 11-12, 31-36, 51-52, 73-77, asparagine 92, serine 117, tyrosine 141, lysine 145, and phenylalanine 169; these read YI, DALYTG, DI, and FAAYS. Substrate is bound by residues serine 117 and tyrosine 141. Tyrosine 141 acts as the Proton acceptor in catalysis. Residues asparagine 170, 189–190, 206–208, arginine 221, and 282–285 contribute to the substrate site; these read HL, TIF, and RGGD.

This sequence belongs to the NAD(P)-dependent epimerase/dehydratase family. As to quaternary structure, homodimer. Requires NAD(+) as cofactor.

It carries out the reaction UDP-alpha-D-glucose = UDP-alpha-D-galactose. It participates in carbohydrate metabolism; galactose metabolism. Its function is as follows. Involved in the metabolism of galactose. Catalyzes the conversion of UDP-galactose (UDP-Gal) to UDP-glucose (UDP-Glc) through a mechanism involving the transient reduction of NAD. It also could be involved in preparation of carbohydrate residues for incorporation into complex polymers, such as exopolysaccharides. This is UDP-glucose 4-epimerase (galE) from Lactobacillus helveticus (Lactobacillus suntoryeus).